Consider the following 343-residue polypeptide: Phosphate acyltransferase (343 aa).

The protein belongs to the PlsX family. As to quaternary structure, homodimer. Probably interacts with PlsY.

It localises to the cytoplasm. The catalysed reaction is a fatty acyl-[ACP] + phosphate = an acyl phosphate + holo-[ACP]. It functions in the pathway lipid metabolism; phospholipid metabolism. In terms of biological role, catalyzes the reversible formation of acyl-phosphate (acyl-PO(4)) from acyl-[acyl-carrier-protein] (acyl-ACP). This enzyme utilizes acyl-ACP as fatty acyl donor, but not acyl-CoA. The chain is Phosphate acyltransferase from Limosilactobacillus reuteri (strain DSM 20016) (Lactobacillus reuteri).